An 852-amino-acid polypeptide reads, in one-letter code: Protein SEY1 (852 aa).

Over 1–738 (MNGHFAAVGN…KRSAIGGITQ (738 aa)) the chain is Cytoplasmic. Positions 47–283 (GFNYHLISVF…FVGGVFLPEY (237 aa)) constitute a GB1/RHD3-type G domain. Residue 57–64 (GSQSTGKS) coordinates GTP. The stretch at 475 to 500 (QYRLFEKELDEVSARLRKEEMRRLAI) forms a coiled coil. Residues 739–759 (VPLYFYIVLLIFGWNEIVMVL) form a helical membrane-spanning segment. Residues 760–762 (RNP) lie on the Lumenal side of the membrane. A helical transmembrane segment spans residues 763–783 (MLFMLLLVMGGGTYVAYTLNL). Over 784–852 (LGPMMQMANA…AQEVEEDDDI (69 aa)) the chain is Cytoplasmic. The tract at residues 825–852 (RSQDNGIGMDRLDSRGKKAQEVEEDDDI) is disordered. Basic and acidic residues predominate over residues 834–845 (DRLDSRGKKAQE).

Belongs to the TRAFAC class dynamin-like GTPase superfamily. GB1/RHD3 GTPase family. RHD3 subfamily.

The protein localises to the endoplasmic reticulum membrane. Functionally, cooperates with the reticulon proteins and tubule-shaping DP1 family proteins to generate and maintain the structure of the tubular endoplasmic reticulum network. Has GTPase activity, which is required for its function in ER organization. This Chaetomium globosum (strain ATCC 6205 / CBS 148.51 / DSM 1962 / NBRC 6347 / NRRL 1970) (Soil fungus) protein is Protein SEY1.